The sequence spans 542 residues: GMP synthase [glutamine-hydrolyzing] (542 aa).

One can recognise a Glutamine amidotransferase type-1 domain in the interval 28–218 (MIVILDFGSQ…VYHICECEPT (191 aa)). Cysteine 105 (nucleophile) is an active-site residue. Residues histidine 192 and glutamate 194 contribute to the active site. One can recognise a GMPS ATP-PPase domain in the interval 219–417 (WTTEAFVDET…IGLPEEIVRR (199 aa)). ATP is bound at residue 246–252 (SGGVDSS).

In terms of assembly, homodimer.

It catalyses the reaction XMP + L-glutamine + ATP + H2O = GMP + L-glutamate + AMP + diphosphate + 2 H(+). Its pathway is purine metabolism; GMP biosynthesis; GMP from XMP (L-Gln route): step 1/1. Functionally, catalyzes the synthesis of GMP from XMP. The chain is GMP synthase [glutamine-hydrolyzing] from Crocosphaera subtropica (strain ATCC 51142 / BH68) (Cyanothece sp. (strain ATCC 51142)).